A 704-amino-acid chain; its full sequence is Chloride intracellular channel protein 6 (704 aa).

Over residues Met1–Gly13 the composition is skewed to low complexity. A disordered region spans residues Met1–Ala446. The segment covering Glu39–Glu48 has biased composition (acidic residues). At Ser44 the chain carries Phosphoserine. Residues Arg67 to Thr83 show a composition bias toward basic and acidic residues. Positions Pro90 to Glu100 are enriched in low complexity. The span at Pro121 to Val147 shows a compositional bias: basic and acidic residues. 13 repeat units span residues Gly157–Leu166, Gly167–Ala176, Gly177–Val186, Gly187–Ala196, Gly197–Leu206, Gly207–Ala216, Gly217–Val226, Gly227–Ala236, Gly237–Val246, Gly247–Ala256, Gly257–Ala266, Gly267–Ala276, and Gly277–Ala286. The 13 X 10 AA tandem repeat of G-D-[SNG]-[VIM]-[DEQ]-A-[EAG]-[GDVE]-[PRG]-[LAVP] stretch occupies residues Gly157–Ala282. Polar residues predominate over residues Glu295 to Pro306. 2 stretches are compositionally biased toward basic and acidic residues: residues Ala350 to Gly360 and Glu371 to Glu385. Phosphoserine is present on residues Ser397 and Ser442. A compositionally biased stretch (basic and acidic residues) spans Gly434 to Ala446. A G-site motif is present at residues Cys487–Ser490. Residues Phe489–Val509 traverse the membrane as a helical segment. The 149-residue stretch at Tyr556–Lys704 folds into the GST C-terminal domain.

The protein belongs to the chloride channel CLIC family. Monomer (soluble state). Interacts with dopamine receptors DRD2, DRD3 and DRD4. Post-translationally, phosphorylated. As to expression, expressed in brain, placenta, pancreas, liver, lung, heart, kidney, liver, spleen, soleus muscle, and brown fat.

It is found in the cytoplasm. Its subcellular location is the cell membrane. It catalyses the reaction chloride(in) = chloride(out). With respect to regulation, channel activity is redox- and pH-regulated. Inhibited by IAA-94. Its function is as follows. In the soluble state, catalyzes glutaredoxin-like thiol disulfide exchange reactions with reduced glutathione as electron donor. Can insert into membranes and form voltage-dependent chloride-selective channels. The channel opens upon membrane depolarization at positive voltages and closes at negative membrane voltages. May play a critical role in water-secreting cells, possibly through the regulation of chloride ion transport. This chain is Chloride intracellular channel protein 6, found in Homo sapiens (Human).